Consider the following 65-residue polypeptide: Peptide ToAcP (65 aa).

Residues 1-24 form the signal peptide; sequence MKMKMIVVISILLIVFSLSSKAMS. Positions 25 to 34 are excised as a propeptide; it reads LEDEQESVQR. The residue at position 58 (A58) is an Alanine amide. Residues 59 to 65 constitute a propeptide that is removed on maturation; sequence GRFDPAV.

In terms of tissue distribution, expressed by the venom gland.

Its subcellular location is the secreted. In terms of biological role, helical wheel projections predict no hydrophobic face, suggesting a non-amphipathic peptide. Does not show antifungal activity. The protein is Peptide ToAcP of Tityus obscurus (Amazonian scorpion).